We begin with the raw amino-acid sequence, 156 residues long: Small ribosomal subunit protein uS7c (156 aa).

This sequence belongs to the universal ribosomal protein uS7 family. In terms of assembly, part of the 30S ribosomal subunit.

It is found in the plastid. The protein resides in the chloroplast. Functionally, one of the primary rRNA binding proteins, it binds directly to 16S rRNA where it nucleates assembly of the head domain of the 30S subunit. The sequence is that of Small ribosomal subunit protein uS7c (rps7) from Chlorella vulgaris (Green alga).